Consider the following 156-residue polypeptide: Cyanate hydratase (156 aa).

Catalysis depends on residues R96, E99, and S122.

The protein belongs to the cyanase family.

It catalyses the reaction cyanate + hydrogencarbonate + 3 H(+) = NH4(+) + 2 CO2. Functionally, catalyzes the reaction of cyanate with bicarbonate to produce ammonia and carbon dioxide. The sequence is that of Cyanate hydratase from Burkholderia ambifaria (strain MC40-6).